The sequence spans 357 residues: 3-dehydroquinate synthase (357 aa).

Residues aspartate 69–lysine 74, glycine 103–aspartate 107, threonine 127–threonine 128, lysine 140, lysine 149, and cysteine 167–threonine 170 each bind NAD(+). Zn(2+) contacts are provided by glutamate 182, histidine 245, and histidine 262.

This sequence belongs to the sugar phosphate cyclases superfamily. Dehydroquinate synthase family. Co(2+) serves as cofactor. It depends on Zn(2+) as a cofactor. The cofactor is NAD(+).

The protein resides in the cytoplasm. The enzyme catalyses 7-phospho-2-dehydro-3-deoxy-D-arabino-heptonate = 3-dehydroquinate + phosphate. Its pathway is metabolic intermediate biosynthesis; chorismate biosynthesis; chorismate from D-erythrose 4-phosphate and phosphoenolpyruvate: step 2/7. In terms of biological role, catalyzes the conversion of 3-deoxy-D-arabino-heptulosonate 7-phosphate (DAHP) to dehydroquinate (DHQ). The polypeptide is 3-dehydroquinate synthase (Idiomarina loihiensis (strain ATCC BAA-735 / DSM 15497 / L2-TR)).